Consider the following 463-residue polypeptide: L-seryl-tRNA(Sec) selenium transferase (463 aa).

An N6-(pyridoxal phosphate)lysine modification is found at K295.

The protein belongs to the SelA family. Homodecamer; pentamer of dimers. Binds only one seryl-tRNA(Sec) per dimer. Pyridoxal 5'-phosphate serves as cofactor.

The protein resides in the cytoplasm. It carries out the reaction L-seryl-tRNA(Sec) + selenophosphate + H(+) = L-selenocysteinyl-tRNA(Sec) + phosphate. It functions in the pathway aminoacyl-tRNA biosynthesis; selenocysteinyl-tRNA(Sec) biosynthesis; selenocysteinyl-tRNA(Sec) from L-seryl-tRNA(Sec) (bacterial route): step 1/1. Its function is as follows. Converts seryl-tRNA(Sec) to selenocysteinyl-tRNA(Sec) required for selenoprotein biosynthesis. This chain is L-seryl-tRNA(Sec) selenium transferase, found in Salmonella typhimurium (strain LT2 / SGSC1412 / ATCC 700720).